The following is a 739-amino-acid chain: Probable beta-glucosidase L (739 aa).

The first 17 residues, 1-17, serve as a signal peptide directing secretion; that stretch reads MQTLFLSLLAAAVTVHA. Asparagine 40 and asparagine 224 each carry an N-linked (GlcNAc...) asparagine glycan. Residue aspartate 252 is part of the active site. N-linked (GlcNAc...) asparagine glycosylation is present at asparagine 398.

Belongs to the glycosyl hydrolase 3 family.

The protein localises to the secreted. The catalysed reaction is Hydrolysis of terminal, non-reducing beta-D-glucosyl residues with release of beta-D-glucose.. It participates in glycan metabolism; cellulose degradation. Beta-glucosidases are one of a number of cellulolytic enzymes involved in the degradation of cellulosic biomass. Catalyzes the last step releasing glucose from the inhibitory cellobiose. The chain is Probable beta-glucosidase L (bglL) from Aspergillus fumigatus (strain ATCC MYA-4609 / CBS 101355 / FGSC A1100 / Af293) (Neosartorya fumigata).